We begin with the raw amino-acid sequence, 222 residues long: Small ribosomal subunit protein uS3 (222 aa).

The 70-residue stretch at 39–108 (IRKFVKNKLS…NVLINIVEVK (70 aa)) folds into the KH type-2 domain.

This sequence belongs to the universal ribosomal protein uS3 family. In terms of assembly, part of the 30S ribosomal subunit. Forms a tight complex with proteins S10 and S14.

Binds the lower part of the 30S subunit head. Binds mRNA in the 70S ribosome, positioning it for translation. The chain is Small ribosomal subunit protein uS3 from Clostridium acetobutylicum (strain ATCC 824 / DSM 792 / JCM 1419 / IAM 19013 / LMG 5710 / NBRC 13948 / NRRL B-527 / VKM B-1787 / 2291 / W).